A 596-amino-acid chain; its full sequence is NADH-quinone oxidoreductase subunit C/D (596 aa).

The NADH dehydrogenase I subunit C stretch occupies residues 1 to 186 (MTDLTAQEPA…SPFELTKAKQ (186 aa)). The interval 210–596 (DFMFLNLGPN…IDFVMSDVDR (387 aa)) is NADH dehydrogenase I subunit D.

The protein in the N-terminal section; belongs to the complex I 30 kDa subunit family. This sequence in the C-terminal section; belongs to the complex I 49 kDa subunit family. As to quaternary structure, NDH-1 is composed of 13 different subunits. Subunits NuoB, CD, E, F, and G constitute the peripheral sector of the complex.

It is found in the cell inner membrane. The enzyme catalyses a quinone + NADH + 5 H(+)(in) = a quinol + NAD(+) + 4 H(+)(out). Functionally, NDH-1 shuttles electrons from NADH, via FMN and iron-sulfur (Fe-S) centers, to quinones in the respiratory chain. The immediate electron acceptor for the enzyme in this species is believed to be ubiquinone. Couples the redox reaction to proton translocation (for every two electrons transferred, four hydrogen ions are translocated across the cytoplasmic membrane), and thus conserves the redox energy in a proton gradient. This is NADH-quinone oxidoreductase subunit C/D from Shigella flexneri serotype 5b (strain 8401).